The primary structure comprises 269 residues: Prespore protein Dd31 (269 aa).

Positions 1–17 are enriched in polar residues; the sequence is MEHNNNPGTPQMSSEFP. Residues 1–35 form a disordered region; it reads MEHNNNPGTPQMSSEFPASTTQTSSSAAAYDNSSH. Over residues 18–29 the composition is skewed to low complexity; it reads ASTTQTSSSAAA. 4 helical membrane passes run 111–131, 139–159, 177–197, and 225–245; these read FGIF…VVSI, VDNF…LYFL, YAYL…FVGF, and VSLF…IMYL.

This sequence belongs to the SCAMP family.

Its subcellular location is the membrane. It localises to the spore coat. The sequence is that of Prespore protein Dd31 (spiA) from Dictyostelium discoideum (Social amoeba).